Here is a 1198-residue protein sequence, read N- to C-terminus: DNA repair protein RAD5 (1198 aa).

Disordered stretches follow at residues 1–129 (MSAE…PSAP) and 348–401 (QGVL…EKLD). A compositionally biased stretch (low complexity) spans 45 to 58 (STSSKFSINIASSS). Positions 104–117 (PRRKRSLQQAHSHH) are enriched in basic residues. Residues 118 to 129 (SSSSSSPVPSAP) show a composition bias toward low complexity. Residues 386-395 (VDDDGEDSGD) are compositionally biased toward acidic residues. Residues 509-737 (PTSQNLSRGG…YSLLHFLRIT (229 aa)) enclose the Helicase ATP-binding domain. 522–529 (DAMGMGKT) contributes to the ATP binding site. The disordered stretch occupies residues 541–564 (EEKPAGNLESQTRDGVEGEIDEEP). The DEAH box motif lies at 688-691 (DEAH). Residues 920-964 (CELCSNEMFDEVLLPCYHRSCQDCIVEWIGTCEDQNKIASCPSCG) form an RING-type zinc finger. Residues 1021-1180 (ALLRQLEEIR…GAKTKETTLA (160 aa)) enclose the Helicase C-terminal domain.

This sequence belongs to the SNF2/RAD54 helicase family.

Its subcellular location is the cytoplasm. It localises to the nucleus. Functionally, probable helicase, member of the UBC2/RAD6 epistasis group. Functions with DNA repair protein RAD18 in error-free postreplication DNA repair. Involved in the maintenance of wild-type rates of instability of simple repetitive sequences such as poly(GT) repeats. Seems to be involved in maintaining a balance which acts in favor of error-prone non-homologous joining during DNA double-strand breaks repairs. This chain is DNA repair protein RAD5 (RAD5), found in Cryptococcus neoformans var. neoformans serotype D (strain JEC21 / ATCC MYA-565) (Filobasidiella neoformans).